Reading from the N-terminus, the 1822-residue chain is MQDASEPVINMPALPMNSVNEQHDRHEDLPEVGTTSVTKIINDSDNEDDENGMDLGRVASESLEGDAVVSIDINTEDSSLSPAKQENEKSPEGIEQKYQEEDLKDDKKSNETIATPVPDAASRASLEKQKSGLTNLEKSTHVVLIKCIEQLIQIKVCMKNEKMKNLMEQLKPLLQTECQFDKFLIVELFQYCFESSQDEVMNISLDTISKLASFAYFSSKDKTPASFGPPKSLLQCMVDMVCDSINDEVVDGNLQLNVVKALSAFILCSEQDSMLHGAILLNSVRKLFNVFLLGDSDTIQSVAQASLTQAVTVVYERLRASHTQSNSTSALPEEDASVTENWVHDEDEPDKKITLHSMASAGTSSLDHVKVDADDPAVTSVENSSIQDAFLVFRSMCRLAVRQTSPDKVSNIRSQAMRAKLISLHLIYRILEKNSDLFMDPTLQFRGIPALKGMTLVHASRQYICLVLSRNAVSPVPQVFEVCCDIFYLMVFSLRAHFKQEIEVFFREVYFPMLDLKNTSYNQKLHTLLIIQRICLNPRALVELYINYDCDRSSTTNVFEQLLFSISKVTTNGPSETISEDIEEILPSLESSERSSTPFLNTNSASLKSEVVQLTTFSDFQLKLKTLQCVLDILQSLSNWAESGLYLSRRGVSTDEQGFVGDYDALSRSDTPVTNPYYNGKQSFEANSHSSSSIALADPSQFESNKQRKKLLRTCINKFNYKPTRGLKMLSENEYVDINDPKAIAEFLFRADGIDKTTLGDYLGEGDEKSISVMHEFIDCLSFINLKFVDALRRLLQCFRLPGEAQKIDRIMLKFSERYMKENPSAFANADTAYILAYSIILLNTDLHSPRIKNKMTKEDFIKNNRGINDGADLDEDYLGFVYDDILKNEIAMKDDQELAAIAPLMNNFSTSSGFTTFTSNGRDLQRVACIQASEEMANKATSVLKKLLYQQKHGSQKTNVYYNATHFEHIGPMLEATWMPILAALSNPLQNSDYVNELNMCLDGFQLVVRIACLFDLDLIRDAFIKTLTNFTNLHSTSEIKLRNTMVIKTLLRIASTEGNNLKDSWKDILTIISQLERVQLIGVGVDETEVPDVINARVRRKNVNIGSSNSIRHVSGSTSRSTRTRSLSKPLSPEAVSELMSTEVVLSIDRIFTQTSSLSGSAIVSFFKALCEVSWDEITSSSDLEQPRLYSLQKLVEISYYNMQRIRVEWSSIWNVLGRFFNMVGSDENRHVAVFALDSLRQLSMHFLEIEELSLFSFQKEFLKPFEYVMASDTVVEVKELVLQCVKQMIQAKISKIKSGWKTLFGVFTFAAKARSEILISMTFDTLVNLFSEHYDTLMQQNCLIDMLISFTELCKNGTNQKISLQSLEIIREVYSSLSTMIKEGLSSKPSVNETFSKYVFPVLFAYYDIIMSAEDLEVRSRALQNLFYIFLEESDDFTEETWEVVSRKFIFPIFSIFGPEADEATVMLRDEEIRTWQSTTLVEALRSLVTLLTRRFDKLHNLLKGYLWLFSNCICRDNITLSRIGTNCMQQLLSGNAYRFEVKDWNLVADMFIELFKETTPHQLLLLETFSNGQGAPVYSENENTQLSHKRGGSLPETSRSISTSSISPEKQMEFRSMIRKCILQLLLISIVAELLDNEEVFNHIPHEHVLKITVAIYDSWQFARKFNEDKSLRITLLNVGFMKQLPNLLRQETASALLYITLLFRLLKTRDPLGKTETDQKIHKLLFPVCAEMLDMYASLVVEKHTRNHAAWQPVIATILDSILNLPLELFSENIHTLYFSCCSMIAKENLDDQLRELLKNYFNRVGHILLNLNAQQE.

Disordered regions lie at residues M1–D54 and D66–L126. S44 bears the Phosphoserine mark. Over residues D72–K84 the composition is skewed to polar residues. The segment covering Q85–N110 has biased composition (basic and acidic residues). S122 and S125 each carry phosphoserine. The short motif at N547 to D551 is the HUS box element. T597 bears the Phosphothreonine mark. At S653 the chain carries Phosphoserine. Residue T654 is modified to Phosphothreonine. S669 is modified (phosphoserine). One can recognise an SEC7 domain in the interval Q701 to N889. An HDS1 domain region spans residues E898 to N1106. S1110 carries the post-translational modification Phosphoserine. Disordered regions lie at residues N1111–K1131 and E1584–I1610. Composition is skewed to low complexity over residues S1117–S1130 and S1597–I1610. Phosphoserine occurs at positions 1606 and 1609.

The protein resides in the cytoplasm. The protein localises to the golgi apparatus. Its subcellular location is the trans-Golgi network. It is found in the cytoplasmic vesicle. It localises to the COPI-coated vesicle membrane. The protein resides in the COPII-coated vesicle membrane. In terms of biological role, guanine exchange factor that acts as an activator of arf1 at the trans-Golgi net-work and is thus involved in vesicular budding and traffic between compartments of the Golgi apparatus. Activation of Arf (ADP-ribosylation factor) GTPases is essential for vesicle formation via recruitment of cargo adapters and coat proteins necessary for Golgi trafficking. Involved in the resistance to tamoxifen (TAM), an anticancer drug used to treat estrogen receptor (ER)-positive breast cancer. The polypeptide is ADP-ribosylation factor guanine nucleotide-exchange factor sec72 (Schizosaccharomyces pombe (strain 972 / ATCC 24843) (Fission yeast)).